Here is a 40-residue protein sequence, read N- to C-terminus: Photosystem II reaction center protein J (40 aa).

Residues 8–28 (IPLWVIGTVAGIPVIGLIGIF) form a helical membrane-spanning segment.

Belongs to the PsbJ family. In terms of assembly, PSII is composed of 1 copy each of membrane proteins PsbA, PsbB, PsbC, PsbD, PsbE, PsbF, PsbH, PsbI, PsbJ, PsbK, PsbL, PsbM, PsbT, PsbX, PsbY, PsbZ, Psb30/Ycf12, at least 3 peripheral proteins of the oxygen-evolving complex and a large number of cofactors. It forms dimeric complexes.

The protein localises to the plastid. The protein resides in the chloroplast thylakoid membrane. One of the components of the core complex of photosystem II (PSII). PSII is a light-driven water:plastoquinone oxidoreductase that uses light energy to abstract electrons from H(2)O, generating O(2) and a proton gradient subsequently used for ATP formation. It consists of a core antenna complex that captures photons, and an electron transfer chain that converts photonic excitation into a charge separation. This is Photosystem II reaction center protein J from Nasturtium officinale (Watercress).